An 846-amino-acid polypeptide reads, in one-letter code: Protein kintoun (846 aa).

Disordered stretches follow at residues 1–21 (MSTAAGSRKKHSKLHNEERAD), 377–412 (DSGVELHSNSESPVEDDADGYMPETPELETAAPPDP), 581–657 (HTSI…DSTI), and 743–846 (HDSS…DDEI). Phosphoserine is present on Ser-378. The span at 399–408 (PETPELETAA) shows a compositional bias: low complexity. Basic residues-rich tracts occupy residues 596–612 (LHKKPSKKQRKRNKKQR) and 750–766 (QRKKNQKRRNCKLRAQQ). Ser-770 carries the phosphoserine modification. The span at 821–832 (TRQDHADADAKN) shows a compositional bias: basic and acidic residues.

This sequence belongs to the PIH1 family. Kintoun subfamily. As to quaternary structure, interacts with Pp1alpha-96A, Pp1-87B, Pp1-13C and flw.

It localises to the cytoplasm. In terms of biological role, required for cytoplasmic pre-assembly of axonemal dyneins, thereby playing a central role in motility in cilia and flagella. Involved in pre-assembly of dynein arm complexes in the cytoplasm before intraflagellar transport loads them for the ciliary compartment. The protein is Protein kintoun of Drosophila pseudoobscura pseudoobscura (Fruit fly).